Consider the following 296-residue polypeptide: Acetylglutamate kinase (296 aa).

Residues 68-69 (GG), Arg90, and Asn195 each bind substrate.

This sequence belongs to the acetylglutamate kinase family. ArgB subfamily.

It is found in the cytoplasm. It carries out the reaction N-acetyl-L-glutamate + ATP = N-acetyl-L-glutamyl 5-phosphate + ADP. The protein operates within amino-acid biosynthesis; L-arginine biosynthesis; N(2)-acetyl-L-ornithine from L-glutamate: step 2/4. Its function is as follows. Catalyzes the ATP-dependent phosphorylation of N-acetyl-L-glutamate. The protein is Acetylglutamate kinase of Desulfotalea psychrophila (strain LSv54 / DSM 12343).